Consider the following 354-residue polypeptide: D-alanine--D-alanine ligase (354 aa).

The ATP-grasp domain occupies 140 to 344; it reads KRLLRDSGLS…ISTLLTRLIM (205 aa). Position 170–225 (170–225) interacts with ATP; the sequence is ADMFGLPFFVKPVNQGSSIGVAKVNDDYSFHSALDIAFFYSHKIIIESCIAGRELE. Mg(2+) is bound by residues aspartate 298, glutamate 311, and asparagine 313.

This sequence belongs to the D-alanine--D-alanine ligase family. The cofactor is Mg(2+). Requires Mn(2+) as cofactor.

It localises to the cytoplasm. It catalyses the reaction 2 D-alanine + ATP = D-alanyl-D-alanine + ADP + phosphate + H(+). The protein operates within cell wall biogenesis; peptidoglycan biosynthesis. Functionally, cell wall formation. The polypeptide is D-alanine--D-alanine ligase (Blochmanniella floridana).